Here is a 418-residue protein sequence, read N- to C-terminus: Gamma-glutamyl phosphate reductase (418 aa).

This sequence belongs to the gamma-glutamyl phosphate reductase family.

It is found in the cytoplasm. The catalysed reaction is L-glutamate 5-semialdehyde + phosphate + NADP(+) = L-glutamyl 5-phosphate + NADPH + H(+). Its pathway is amino-acid biosynthesis; L-proline biosynthesis; L-glutamate 5-semialdehyde from L-glutamate: step 2/2. Catalyzes the NADPH-dependent reduction of L-glutamate 5-phosphate into L-glutamate 5-semialdehyde and phosphate. The product spontaneously undergoes cyclization to form 1-pyrroline-5-carboxylate. The chain is Gamma-glutamyl phosphate reductase from Chlorobium limicola (strain DSM 245 / NBRC 103803 / 6330).